The sequence spans 292 residues: 2-(5''-triphosphoribosyl)-3'-dephosphocoenzyme-A synthase (292 aa).

Belongs to the CitG/MdcB family.

It catalyses the reaction 3'-dephospho-CoA + ATP = 2'-(5''-triphospho-alpha-D-ribosyl)-3'-dephospho-CoA + adenine. Catalyzes the formation of 2-(5''-triphosphoribosyl)-3'-dephosphocoenzyme-A, the precursor of the prosthetic group of the holo-acyl carrier protein (gamma chain) of citrate lyase, from ATP and dephospho-CoA. The polypeptide is 2-(5''-triphosphoribosyl)-3'-dephosphocoenzyme-A synthase (Escherichia coli (strain UTI89 / UPEC)).